The sequence spans 324 residues: MCATLCTLLDEISILILMLLLIQLEIRVSAAQGGGSHAAMSPEQYWRSILPDSTPMPISISQLLGDGYPYSPAVGLPKRGDRVQIRYGPNIYGLAASQQFFKDPTMGLFFLETNLQSSKSIKLHFANMMAGTKFLPRGEADAVPFSSKDLQEILARFGVRPGSVDASVVKNTLLECELPANKGEKKACATSLESMVDFVASSLGTRDIKAASTFLVGKDGDTPAQEYTVTGARRMAETGQLIACHPESYPYAVFMCHLTEATRAYKASLVGKDGAAVEAVAVCHTDTAEWNPKHAAFQVLGVKPGTVPVCHFVQPDVVVWTRRG.

A signal peptide spans Met1–Ala30. In terms of domain architecture, BURP spans Phe109–Arg323.

As to expression, expressed in panicles.

The sequence is that of BURP domain-containing protein 5 (BURP5) from Oryza sativa subsp. japonica (Rice).